The primary structure comprises 361 residues: Phospho-N-acetylmuramoyl-pentapeptide-transferase (361 aa).

A run of 10 helical transmembrane segments spans residues 28–48 (LAII…IKFL), 74–94 (TMGG…LADL), 99–119 (IWIT…DDYA), 133–153 (SKFL…EYLD), 168–188 (LSLD…VGSS), 203–223 (VPIA…GNLI), 236–256 (TGEL…FLWF), 263–283 (VFMG…ISVI), 288–308 (IVLA…ILQV), and 338–358 (KVVI…LSSL).

The protein belongs to the glycosyltransferase 4 family. MraY subfamily. Mg(2+) serves as cofactor.

The protein resides in the cell inner membrane. The enzyme catalyses UDP-N-acetyl-alpha-D-muramoyl-L-alanyl-gamma-D-glutamyl-meso-2,6-diaminopimeloyl-D-alanyl-D-alanine + di-trans,octa-cis-undecaprenyl phosphate = di-trans,octa-cis-undecaprenyl diphospho-N-acetyl-alpha-D-muramoyl-L-alanyl-D-glutamyl-meso-2,6-diaminopimeloyl-D-alanyl-D-alanine + UMP. Its pathway is cell wall biogenesis; peptidoglycan biosynthesis. Its function is as follows. Catalyzes the initial step of the lipid cycle reactions in the biosynthesis of the cell wall peptidoglycan: transfers peptidoglycan precursor phospho-MurNAc-pentapeptide from UDP-MurNAc-pentapeptide onto the lipid carrier undecaprenyl phosphate, yielding undecaprenyl-pyrophosphoryl-MurNAc-pentapeptide, known as lipid I. The sequence is that of Phospho-N-acetylmuramoyl-pentapeptide-transferase from Rickettsia prowazekii (strain Madrid E).